Consider the following 106-residue polypeptide: uncharacterized protein (106 aa).

It is found in the mitochondrion. This is an uncharacterized protein from Arabidopsis thaliana (Mouse-ear cress).